Here is a 380-residue protein sequence, read N- to C-terminus: Alkanesulfonate monooxygenase (380 aa).

This sequence belongs to the SsuD family. Homotetramer.

It catalyses the reaction an alkanesulfonate + FMNH2 + O2 = an aldehyde + FMN + sulfite + H2O + 2 H(+). In terms of biological role, catalyzes the desulfonation of aliphatic sulfonates. In Pectobacterium atrosepticum (strain SCRI 1043 / ATCC BAA-672) (Erwinia carotovora subsp. atroseptica), this protein is Alkanesulfonate monooxygenase.